We begin with the raw amino-acid sequence, 163 residues long: ATP synthase subunit b (163 aa).

The helical transmembrane segment at 10-29 (VFMQMFHFLLMLVVLRLFAY) threads the bilayer.

This sequence belongs to the ATPase B chain family. As to quaternary structure, F-type ATPases have 2 components, F(1) - the catalytic core - and F(0) - the membrane proton channel. F(1) has five subunits: alpha(3), beta(3), gamma(1), delta(1), epsilon(1). F(0) has three main subunits: a(1), b(2) and c(10-14). The alpha and beta chains form an alternating ring which encloses part of the gamma chain. F(1) is attached to F(0) by a central stalk formed by the gamma and epsilon chains, while a peripheral stalk is formed by the delta and b chains.

The protein resides in the cell membrane. In terms of biological role, f(1)F(0) ATP synthase produces ATP from ADP in the presence of a proton or sodium gradient. F-type ATPases consist of two structural domains, F(1) containing the extramembraneous catalytic core and F(0) containing the membrane proton channel, linked together by a central stalk and a peripheral stalk. During catalysis, ATP synthesis in the catalytic domain of F(1) is coupled via a rotary mechanism of the central stalk subunits to proton translocation. Functionally, component of the F(0) channel, it forms part of the peripheral stalk, linking F(1) to F(0). In Desulforudis audaxviator (strain MP104C), this protein is ATP synthase subunit b.